A 46-amino-acid polypeptide reads, in one-letter code: Diuretic hormone class 1 (46 aa).

Residue isoleucine 46 is modified to Isoleucine amide.

It localises to the secreted. In terms of biological role, regulation of fluid secretion. Stimulates primary urine secretion by Malpighian tubules and causes a dose-dependent stimulation of cAMP levels in the tubules. Has a greater effect on the transport of Na(+) then K(+) ions. In vitro, has synergistic effects with the smaller diuretic hormone DH(31) which co-occurs with it. In Diploptera punctata (Pacific beetle cockroach), this protein is Diuretic hormone class 1.